The following is a 256-amino-acid chain: Homeobox protein TGIF2LX (256 aa).

Residues 1–45 (MEAAADSPAETRSRVEKDSRRVEKDSRRPKKDSPAKTQSPAQDTS) are disordered. The span at 9–34 (AETRSRVEKDSRRVEKDSRRPKKDSP) shows a compositional bias: basic and acidic residues. A compositionally biased stretch (polar residues) spans 35 to 45 (AKTQSPAQDTS). Positions 62–125 (EHKKKRKGYL…INARRRILPD (64 aa)) form a DNA-binding region, homeobox; TALE-type. Positions 136-224 (VGHKTGKDAN…SSSPEPVSTE (89 aa)) are disordered. The segment covering 166–179 (DNVQSLPLRSSPKG) has biased composition (polar residues). Over residues 209–224 (VSNITSSSSPEPVSTE) the composition is skewed to low complexity.

It belongs to the TALE/TGIF homeobox family.

The protein localises to the nucleus. Functionally, may have a transcription role in testis. The polypeptide is Homeobox protein TGIF2LX (TGIF2LX) (Papio hamadryas (Hamadryas baboon)).